Here is a 64-residue protein sequence, read N- to C-terminus: Beta-defensin 1 (64 aa).

Residues 1 to 20 (MRLHHLLLVLFFLVLSAGSG) form the signal peptide. The propeptide occupies 21–26 (FTQGIR). 3 cysteine pairs are disulfide-bonded: cysteine 31–cysteine 60, cysteine 38–cysteine 53, and cysteine 43–cysteine 61.

This sequence belongs to the beta-defensin family. As to quaternary structure, monomer. Homodimer.

It localises to the secreted. It is found in the membrane. Has bactericidal activity. May act as a ligand for C-C chemokine receptor CCR6. Positively regulates the sperm motility and bactericidal activity in a CCR6-dependent manner. Binds to CCR6 and triggers Ca2+ mobilization in the sperm which is important for its motility. The protein is Beta-defensin 1 (DEFB1) of Capra hircus (Goat).